The primary structure comprises 364 residues: DNA-(apurinic or apyrimidinic site) endonuclease (364 aa).

2 stretches are compositionally biased toward basic and acidic residues: residues 1 to 12 (MKRFFKPIEKEN) and 23 to 39 (PEKRDGDGDGVEEEKNQ). Residues 1–42 (MKRFFKPIEKENSPAAKKPCLSPEKRDGDGDGVEEEKNQNEP) form a disordered region. Glu-80 is a binding site for Mg(2+). Tyr-182 is a catalytic residue. Residues Asp-222, Asn-224, and Asp-342 each contribute to the Mg(2+) site. Asp-222 acts as the Proton donor/acceptor in catalysis.

It belongs to the DNA repair enzymes AP/exoA family. In terms of assembly, interacts with ROS1. ROS1 is required for APE1L to stably associate with the DNA substrate. Requires Mg(2+) as cofactor. Expressed in leaves, flower buds and developing siliques. Not detected in roots.

It localises to the nucleus. Its subcellular location is the nucleolus. Apurinic/apyrimidinic (AP) endonuclease involved in active DNA demethylation and gene imprinting. According to a report, also displays an in vitro 3'-phosphatase activity. According to another report, has no in vitro 3'-phosphatase activity. Catalyzes the conversion of the 3'-blocking groups 3'-phosphor-alpha,beta-unsaturated aldehyde (3'-PUA) generated by ROS1 to 3'-OH. Has a strong non-specific affinity to DNA. Redundant with APE2 and at least one functional allele is required for seed viability. This chain is DNA-(apurinic or apyrimidinic site) endonuclease, found in Arabidopsis thaliana (Mouse-ear cress).